Reading from the N-terminus, the 156-residue chain is ATP synthase subunit b (156 aa).

A helical membrane pass occupies residues 12 to 32; it reads LAFAIFVWFCMKLVWPPITAA.

The protein belongs to the ATPase B chain family. As to quaternary structure, F-type ATPases have 2 components, F(1) - the catalytic core - and F(0) - the membrane proton channel. F(1) has five subunits: alpha(3), beta(3), gamma(1), delta(1), epsilon(1). F(0) has three main subunits: a(1), b(2) and c(10-14). The alpha and beta chains form an alternating ring which encloses part of the gamma chain. F(1) is attached to F(0) by a central stalk formed by the gamma and epsilon chains, while a peripheral stalk is formed by the delta and b chains.

The protein localises to the cell inner membrane. Its function is as follows. F(1)F(0) ATP synthase produces ATP from ADP in the presence of a proton or sodium gradient. F-type ATPases consist of two structural domains, F(1) containing the extramembraneous catalytic core and F(0) containing the membrane proton channel, linked together by a central stalk and a peripheral stalk. During catalysis, ATP synthesis in the catalytic domain of F(1) is coupled via a rotary mechanism of the central stalk subunits to proton translocation. Functionally, component of the F(0) channel, it forms part of the peripheral stalk, linking F(1) to F(0). The chain is ATP synthase subunit b from Stutzerimonas stutzeri (strain A1501) (Pseudomonas stutzeri).